We begin with the raw amino-acid sequence, 348 residues long: Chemokine C-C motif receptor-like 2 (348 aa).

At 1–43 (MANYTPAPEDDYDVFIEDDLSDDEIEPCTPYDPKILSAQLVPY) the chain is on the extracellular side. Residues 44–64 (LYTTVFMVGLLDNILVVFILV) traverse the membrane as a helical segment. Topologically, residues 65–76 (KYKGLRQAENMS) are cytoplasmic. A helical membrane pass occupies residues 77 to 97 (FLNLALSNLGFLLTLPFWAYA). Topologically, residues 98-110 (ASHGEGFDDPLCK) are extracellular. A disulfide bridge connects residues cysteine 109 and cysteine 187. A helical transmembrane segment spans residues 111 to 131 (ILLLLYSIGLYSEAFFNVLLT). Residues 132–150 (VQRYKEFFHVRRRFSACRT) are Cytoplasmic-facing. The helical transmembrane segment at 151–171 (VAGSIFISVLVWVTATLVTLP) threads the bilayer. The Extracellular portion of the chain corresponds to 172-204 (ELVSYKPQMQSQKYKCFFTGLHFLPADETFWKH). A helical membrane pass occupies residues 205–225 (FLTLKMNILGFLLPLFAFVYC). Over 226 to 244 (YVRMRKTLQFRERNYGLFK) the chain is Cytoplasmic. The chain crosses the membrane as a helical span at residues 245–265 (LVFTIMAVFLLMWGPYNIVLF). At 266–292 (LSAFNEHFSLHGCGSSYNLNKSVQITR) the chain is on the extracellular side. An N-linked (GlcNAc...) asparagine glycan is attached at asparagine 285. A helical membrane pass occupies residues 293–313 (IIAATHCCVNPLLYVFLDKAF). Residues 314 to 348 (RKHLCHLFYLCSDTAPQPTEEPAQGASGEEYHLSS) lie on the Cytoplasmic side of the membrane.

This sequence belongs to the G-protein coupled receptor 1 family.

The protein localises to the cell membrane. Functionally, receptor for CCL19 and chemerin/RARRES2. Does not appear to be a signaling receptor, but may have a role in modulating chemokine-triggered immune responses by capturing and internalizing CCL19 or by presenting RARRES2 ligand to CMKLR1, a functional signaling receptor. Plays a critical role for the development of Th2 responses. This Bos taurus (Bovine) protein is Chemokine C-C motif receptor-like 2 (CCRL2).